A 475-amino-acid polypeptide reads, in one-letter code: Aspartyl/glutamyl-tRNA(Asn/Gln) amidotransferase subunit B (475 aa).

It belongs to the GatB/GatE family. GatB subfamily. Heterotrimer of A, B and C subunits.

The enzyme catalyses L-glutamyl-tRNA(Gln) + L-glutamine + ATP + H2O = L-glutaminyl-tRNA(Gln) + L-glutamate + ADP + phosphate + H(+). It carries out the reaction L-aspartyl-tRNA(Asn) + L-glutamine + ATP + H2O = L-asparaginyl-tRNA(Asn) + L-glutamate + ADP + phosphate + 2 H(+). In terms of biological role, allows the formation of correctly charged Asn-tRNA(Asn) or Gln-tRNA(Gln) through the transamidation of misacylated Asp-tRNA(Asn) or Glu-tRNA(Gln) in organisms which lack either or both of asparaginyl-tRNA or glutaminyl-tRNA synthetases. The reaction takes place in the presence of glutamine and ATP through an activated phospho-Asp-tRNA(Asn) or phospho-Glu-tRNA(Gln). This chain is Aspartyl/glutamyl-tRNA(Asn/Gln) amidotransferase subunit B, found in Clostridium novyi (strain NT).